The chain runs to 183 residues: MQKQVVVMDEAAIKRALTRVSYEIIERNKGTKNLALVGIKTRGIYLAERLHKRILEIEGIDVPVGDIDITLYRDDLSFKDDKTREPAVHGTNIPFDINGKKVVLVDDVLYTGRTVRAAMDALMDVGRPAQIHLAVLADRGHRELPIRADYVGKNIPTSGNERVEVRLTDVDNEEDAVIINKNE.

Positions 102–114 (VVLVDDVLYTGRT) match the PRPP-binding motif.

Belongs to the purine/pyrimidine phosphoribosyltransferase family. PyrR subfamily. In terms of assembly, homodimer and homohexamer; in equilibrium.

It catalyses the reaction UMP + diphosphate = 5-phospho-alpha-D-ribose 1-diphosphate + uracil. Functionally, regulates transcriptional attenuation of the pyrimidine nucleotide (pyr) operon by binding in a uridine-dependent manner to specific sites on pyr mRNA. This disrupts an antiterminator hairpin in the RNA and favors formation of a downstream transcription terminator, leading to a reduced expression of downstream genes. Its function is as follows. Also displays a weak uracil phosphoribosyltransferase activity which is not physiologically significant. This chain is Bifunctional protein PyrR, found in Listeria monocytogenes serotype 4b (strain CLIP80459).